Consider the following 164-residue polypeptide: Ribosome-binding factor A (164 aa).

Residues 123–164 (ARDLGVPPSGEDDGDDEADDEDDDGGEEGPGAAAPPPADEGR) are disordered. Positions 132–149 (GEDDGDDEADDEDDDGGE) are enriched in acidic residues. The segment covering 155–164 (AAPPPADEGR) has biased composition (pro residues).

Belongs to the RbfA family. As to quaternary structure, monomer. Binds 30S ribosomal subunits, but not 50S ribosomal subunits or 70S ribosomes.

It localises to the cytoplasm. Functionally, one of several proteins that assist in the late maturation steps of the functional core of the 30S ribosomal subunit. Associates with free 30S ribosomal subunits (but not with 30S subunits that are part of 70S ribosomes or polysomes). Required for efficient processing of 16S rRNA. May interact with the 5'-terminal helix region of 16S rRNA. The protein is Ribosome-binding factor A of Rhodospirillum rubrum (strain ATCC 11170 / ATH 1.1.1 / DSM 467 / LMG 4362 / NCIMB 8255 / S1).